Consider the following 355-residue polypeptide: Serum paraoxonase/arylesterase 1 (355 aa).

The cysteines at positions 42 and 353 are disulfide-linked. Positions 53 and 54 each coordinate Ca(2+). Histidine 115 (proton acceptor) is an active-site residue. 4 residues coordinate Ca(2+): isoleucine 117, asparagine 168, aspartate 169, and asparagine 224. Asparagine 253 carries N-linked (GlcNAc...) asparagine glycosylation. Aspartate 269 and asparagine 270 together coordinate Ca(2+). 2 N-linked (GlcNAc...) asparagine glycosylation sites follow: asparagine 270 and asparagine 324.

The protein belongs to the paraoxonase family. As to quaternary structure, homodimer. Heterooligomer with phosphate-binding protein (HPBP). Interacts with CLU. Requires Ca(2+) as cofactor. Glycosylated. In terms of processing, the signal sequence is not cleaved. Post-translationally, present in two forms, form B contains a disulfide bond, form A does not. Plasma, associated with HDL (at protein level). Expressed in liver, but not in heart, brain, placenta, lung, skeletal muscle, kidney or pancreas.

The protein resides in the secreted. It is found in the extracellular space. It carries out the reaction a phenyl acetate + H2O = a phenol + acetate + H(+). The enzyme catalyses An aryl dialkyl phosphate + H2O = dialkyl phosphate + an aryl alcohol.. It catalyses the reaction an N-acyl-L-homoserine lactone + H2O = an N-acyl-L-homoserine + H(+). In terms of biological role, hydrolyzes the toxic metabolites of a variety of organophosphorus insecticides. Capable of hydrolyzing a broad spectrum of organophosphate substrates and lactones, and a number of aromatic carboxylic acid esters. Mediates an enzymatic protection of low density lipoproteins against oxidative modification and the consequent series of events leading to atheroma formation. This Homo sapiens (Human) protein is Serum paraoxonase/arylesterase 1 (PON1).